The primary structure comprises 474 residues: MSRLVVVSNRIALPDDKKSSAGGLAVGILGALRAAGGLWFGWSGEIGDDQQPLKQVSRGNISWASFNLNERDHDEYYNQFSNAVLWPAFHYRLDLVSFQREAWEGYLRVNAMLADKLLPLIEPDDTLWIHDYHLLPFASELRKRGVNNRIGFFLHIPFPTPEIFNALPPHAELLEQLCDYDLLGFQTESDRTAFLDSIAMQTRLSDLGDKRYQAWGKAFSTEVYPIGIDPDEITRNAKGPLPPKLAQLKNELKNVKNIFSVERLDYSKGLPERFLAYETLLEKYPQHHGKIRYTQIAPTSRGDVQAYQDIRHQLETAAGRINGQFGQLGWTPLYYLNQHFDRKLLMKVFRYSDVGLVTPLRDGMNLVAKEYVAAQDPDNPGVLVLSQFAGAAQELTSALIVNPYDRDEVAAALDRALSMPLAERIARHSAMLDVIRENDIHNWQARFVEDLQHISPRSEESRLRGKIATFPKLA.

Arg-10 contacts D-glucose 6-phosphate. 22–23 (GG) serves as a coordination point for UDP-alpha-D-glucose. Residues Tyr-77 and Asp-131 each coordinate D-glucose 6-phosphate. Positions 263 and 268 each coordinate UDP-alpha-D-glucose. Position 301 (Arg-301) interacts with D-glucose 6-phosphate. UDP-alpha-D-glucose contacts are provided by residues Phe-340 and 366 to 370 (LVAKE).

It belongs to the glycosyltransferase 20 family. As to quaternary structure, homotetramer.

The catalysed reaction is D-glucose 6-phosphate + UDP-alpha-D-glucose = alpha,alpha-trehalose 6-phosphate + UDP + H(+). The protein operates within glycan biosynthesis; trehalose biosynthesis. Its function is as follows. Probably involved in the osmoprotection via the biosynthesis of trehalose. Catalyzes the transfer of glucose from UDP-alpha-D-glucose (UDP-Glc) to D-glucose 6-phosphate (Glc-6-P) to form trehalose-6-phosphate. Acts with retention of the anomeric configuration of the UDP-sugar donor. The polypeptide is Trehalose-6-phosphate synthase (Klebsiella pneumoniae subsp. pneumoniae (strain ATCC 700721 / MGH 78578)).